A 250-amino-acid chain; its full sequence is Ribosomal RNA small subunit methyltransferase J (250 aa).

S-adenosyl-L-methionine-binding positions include 101 to 102, 117 to 118, 153 to 154, and Asp-171; these read RD, ER, and SS.

Belongs to the methyltransferase superfamily. RsmJ family.

The protein localises to the cytoplasm. It carries out the reaction guanosine(1516) in 16S rRNA + S-adenosyl-L-methionine = N(2)-methylguanosine(1516) in 16S rRNA + S-adenosyl-L-homocysteine + H(+). In terms of biological role, specifically methylates the guanosine in position 1516 of 16S rRNA. This chain is Ribosomal RNA small subunit methyltransferase J, found in Escherichia coli (strain UTI89 / UPEC).